The primary structure comprises 190 residues: Xanthine phosphoribosyltransferase (190 aa).

Leucine 20 and asparagine 27 together coordinate xanthine. 128–132 (ANGEA) lines the 5-phospho-alpha-D-ribose 1-diphosphate pocket. Residue lysine 156 coordinates xanthine.

This sequence belongs to the purine/pyrimidine phosphoribosyltransferase family. Xpt subfamily. In terms of assembly, homodimer.

The protein resides in the cytoplasm. It catalyses the reaction XMP + diphosphate = xanthine + 5-phospho-alpha-D-ribose 1-diphosphate. Its pathway is purine metabolism; XMP biosynthesis via salvage pathway; XMP from xanthine: step 1/1. In terms of biological role, converts the preformed base xanthine, a product of nucleic acid breakdown, to xanthosine 5'-monophosphate (XMP), so it can be reused for RNA or DNA synthesis. The sequence is that of Xanthine phosphoribosyltransferase from Clostridium botulinum (strain Eklund 17B / Type B).